We begin with the raw amino-acid sequence, 423 residues long: Core protease OPG082 (423 aa).

Residues histidine 241, aspartate 248, and cysteine 328 contribute to the active site.

This sequence belongs to the peptidase C57 family.

Its subcellular location is the virion. Late protein responsible for processing most or all of the viral core and membrane proteins known to undergo morphogenesis-associated proteolysis. These proteolytic events are involved in the transformation of immature virions (IV) into mature virions (MV). Probably cleaves at least the OPG129, OPG136, OPG098, and OPG144 precursors preferentially at Ala-Gly-|-Ala motifs. Also seems to process Ala-Gly-|-Ser and Ala-Gly-|-Thr motifs. The chain is Core protease OPG082 (OPG083) from Homo sapiens (Human).